Consider the following 409-residue polypeptide: Ubiquitin-associated domain-containing protein 1 (409 aa).

N-acetylmethionine is present on M1. The Ubiquitin-like domain maps to 14-98 (LRLHICAADG…LLLIKKRAPS (85 aa)). One can recognise a UBA 1 domain in the interval 187–231 (DEDERVDETALRQLTEMGFPESRASKALRLNHMSVPQAMEWLIEH). Residues 235–273 (PAIDTPLPGHAAQAEASAAAATSSSSSEAAVGTSVEDEE) form a disordered region. The span at 245–264 (AAQAEASAAAATSSSSSEAA) shows a compositional bias: low complexity. A UBA 2 domain is found at 292–332 (RADARAVISLMEMGFDEKEVIDALRVNNNQQNAACEWLLGD). An STI1 domain is found at 357–396 (NPVVQLGLTNPKTLLAFEDMLENPLNSTQWMNDPETGPVM).

As to quaternary structure, component of the KPC complex composed of RNF123/KPC1 and UBAC1/KPC2. Interacts (via ubiquitin-like domain) with RNF123. Interacts (via ubiquitin-like and UBA domains) with the proteasome via its N-terminal domain.

It localises to the cytoplasm. It functions in the pathway protein modification; protein ubiquitination. Non-catalytic component of the KPC complex, a E3 ubiquitin-protein ligase complex that mediates polyubiquitination of target proteins, such as CDKN1B and NFKB1. The KPC complex catalyzes polyubiquitination and proteasome-mediated degradation of CDKN1B during G1 phase of the cell cycle. The KPC complex also acts as a key regulator of the NF-kappa-B signaling by promoting maturation of the NFKB1 component of NF-kappa-B by catalyzing ubiquitination of the NFKB1 p105 precursor. Within the KPC complex, UBAC1 acts as an adapter that promotes the transfer of target proteins that have been polyubiquitinated by RNF123/KPC1 to the 26S proteasome. This Rattus norvegicus (Rat) protein is Ubiquitin-associated domain-containing protein 1 (Ubac1).